A 303-amino-acid chain; its full sequence is Acetylglutamate kinase (303 aa).

Substrate contacts are provided by residues glycine 76–glycine 77, arginine 98, and asparagine 199.

The protein belongs to the acetylglutamate kinase family. ArgB subfamily.

It localises to the cytoplasm. The enzyme catalyses N-acetyl-L-glutamate + ATP = N-acetyl-L-glutamyl 5-phosphate + ADP. The protein operates within amino-acid biosynthesis; L-arginine biosynthesis; N(2)-acetyl-L-ornithine from L-glutamate: step 2/4. Functionally, catalyzes the ATP-dependent phosphorylation of N-acetyl-L-glutamate. The polypeptide is Acetylglutamate kinase (Clavibacter michiganensis subsp. michiganensis (strain NCPPB 382)).